The sequence spans 457 residues: DNA repair protein RadA (457 aa).

The C4-type zinc finger occupies cysteine 10–cysteine 27. Glycine 97–serine 104 contacts ATP. The RadA KNRFG motif motif lies at lysine 254–glycine 258. The segment at aspartate 353–arginine 457 is lon-protease-like.

This sequence belongs to the RecA family. RadA subfamily.

Functionally, DNA-dependent ATPase involved in processing of recombination intermediates, plays a role in repairing DNA breaks. Stimulates the branch migration of RecA-mediated strand transfer reactions, allowing the 3' invading strand to extend heteroduplex DNA faster. Binds ssDNA in the presence of ADP but not other nucleotides, has ATPase activity that is stimulated by ssDNA and various branched DNA structures, but inhibited by SSB. Does not have RecA's homology-searching function. The sequence is that of DNA repair protein RadA from Halalkalibacterium halodurans (strain ATCC BAA-125 / DSM 18197 / FERM 7344 / JCM 9153 / C-125) (Bacillus halodurans).